The sequence spans 380 residues: Anhydro-N-acetylmuramic acid kinase (380 aa).

Position 9-16 (9-16) interacts with ATP; it reads GTSVDGID.

It belongs to the anhydro-N-acetylmuramic acid kinase family.

The catalysed reaction is 1,6-anhydro-N-acetyl-beta-muramate + ATP + H2O = N-acetyl-D-muramate 6-phosphate + ADP + H(+). It participates in amino-sugar metabolism; 1,6-anhydro-N-acetylmuramate degradation. It functions in the pathway cell wall biogenesis; peptidoglycan recycling. Functionally, catalyzes the specific phosphorylation of 1,6-anhydro-N-acetylmuramic acid (anhMurNAc) with the simultaneous cleavage of the 1,6-anhydro ring, generating MurNAc-6-P. Is required for the utilization of anhMurNAc either imported from the medium or derived from its own cell wall murein, and thus plays a role in cell wall recycling. This Cyanothece sp. (strain PCC 7425 / ATCC 29141) protein is Anhydro-N-acetylmuramic acid kinase.